Consider the following 267-residue polypeptide: Exodeoxyribonuclease III (267 aa).

Glu-34 provides a ligand contact to Mg(2+). The active site involves Tyr-109. 3 residues coordinate Mg(2+): Asp-151, Asn-153, and Asp-258. The Proton donor/acceptor role is filled by Asp-151.

This sequence belongs to the DNA repair enzymes AP/ExoA family. As to quaternary structure, monomer. Mg(2+) is required as a cofactor. It depends on Mn(2+) as a cofactor.

It catalyses the reaction Exonucleolytic cleavage in the 3'- to 5'-direction to yield nucleoside 5'-phosphates.. Its function is as follows. Major apurinic-apyrimidinic endonuclease of E.coli. It removes the damaged DNA at cytosines and guanines by cleaving on the 3'-side of the AP site by a beta-elimination reaction. This is Exodeoxyribonuclease III (xthA) from Haemophilus influenzae (strain ATCC 51907 / DSM 11121 / KW20 / Rd).